Reading from the N-terminus, the 21-residue chain is S-layer protein 2 (21 aa).

It is found in the secreted. Its subcellular location is the cell wall. The protein resides in the S-layer. Functionally, the S-layer is a paracrystalline mono-layered assembly of proteins which coat the surface of bacteria. The sequence is that of S-layer protein 2 from Bacillus thuringiensis subsp. konkukian.